Here is a 473-residue protein sequence, read N- to C-terminus: Photosystem II CP43 reaction center protein (473 aa).

The propeptide occupies 1-14; that stretch reads MKTLYSRRRFYHVE. Thr15 is subject to N-acetylthreonine. A Phosphothreonine modification is found at Thr15. A run of 5 helical transmembrane segments spans residues 69–93, 134–155, 178–200, 255–275, and 291–312; these read LFEVAHFVPEKPMYEQGLILLPHLA, LLGPETLEESFPFFGYVWKDRN, KALYFGGVYDTWAPGGGDVRKIT, KPFAWARRALVWSGEAYLSYS, and WFNNTAYPSEFYGPTGPEASQA. [CaMn4O5] cluster is bound at residue Glu367. Residues 447–471 form a helical membrane-spanning segment; it reads RARAAAAGFEKGIDRDFEPVLSMTP.

This sequence belongs to the PsbB/PsbC family. PsbC subfamily. In terms of assembly, PSII is composed of 1 copy each of membrane proteins PsbA, PsbB, PsbC, PsbD, PsbE, PsbF, PsbH, PsbI, PsbJ, PsbK, PsbL, PsbM, PsbT, PsbX, PsbY, PsbZ, Psb30/Ycf12, at least 3 peripheral proteins of the oxygen-evolving complex and a large number of cofactors. It forms dimeric complexes. It depends on Binds multiple chlorophylls and provides some of the ligands for the Ca-4Mn-5O cluster of the oxygen-evolving complex. It may also provide a ligand for a Cl- that is required for oxygen evolution. PSII binds additional chlorophylls, carotenoids and specific lipids. as a cofactor.

The protein resides in the plastid. It is found in the chloroplast thylakoid membrane. Functionally, one of the components of the core complex of photosystem II (PSII). It binds chlorophyll and helps catalyze the primary light-induced photochemical processes of PSII. PSII is a light-driven water:plastoquinone oxidoreductase, using light energy to abstract electrons from H(2)O, generating O(2) and a proton gradient subsequently used for ATP formation. This is Photosystem II CP43 reaction center protein from Solanum bulbocastanum (Wild potato).